Here is a 504-residue protein sequence, read N- to C-terminus: Protoporphyrinogen oxidase, mitochondrial (504 aa).

Residues Gly20 to Gly25, Glu43 to Ala44, Lys51, and Gly65 to Thr68 each bind FAD. The segment at Ser213–Gln232 is disordered. Residues Val264 and Leu473–Val475 contribute to the FAD site.

Belongs to the protoporphyrinogen/coproporphyrinogen oxidase family. Protoporphyrinogen oxidase subfamily. Requires FAD as cofactor.

It localises to the mitochondrion. The enzyme catalyses protoporphyrinogen IX + 3 O2 = protoporphyrin IX + 3 H2O2. Its pathway is porphyrin-containing compound metabolism; protoporphyrin-IX biosynthesis; protoporphyrin-IX from protoporphyrinogen-IX: step 1/1. Its activity is regulated as follows. Inhibited by the herbicide acifluorfen. Catalyzes the 6-electron oxidation of protoporphyrinogen-IX to form protoporphyrin-IX. Its function is as follows. Provides precursor for the mitochondrial and plastidic heme synthesis and the predominant chlorophyll synthesis in plastids. The sequence is that of Protoporphyrinogen oxidase, mitochondrial (PPXII) from Nicotiana tabacum (Common tobacco).